We begin with the raw amino-acid sequence, 347 residues long: UPF0284 protein LS215_0030 (347 aa).

This sequence belongs to the UPF0284 family.

In Saccharolobus islandicus (strain L.S.2.15 / Lassen #1) (Sulfolobus islandicus), this protein is UPF0284 protein LS215_0030.